The chain runs to 509 residues: DNA nucleotidylexotransferase (509 aa).

Positions 1 to 24 (MDPPRASHLSPRKKRPRQTGALMA) are disordered. The Nuclear localization signal motif lies at 11–17 (PRKKRPR). The 98-residue stretch at 27–124 (PQDIKFQDLV…KPVEMTGKHQ (98 aa)) folds into the BRCT domain. Ser-134 is subject to Phosphoserine. Residues 151–509 (SQYACQRRTT…DYIEPWERNA (359 aa)) form a mediates interaction with DNTTIP2 region. The tract at residues 258-262 (VGLKT) is involved in DNA binding. Residues 333 to 338 (GFRRGK) and 342 to 345 (HDVD) contribute to the a 2'-deoxyribonucleoside 5'-triphosphate site. The Mg(2+) site is built by Asp-343, Asp-345, and Asp-433. 448 to 449 (GW) lines the a 2'-deoxyribonucleoside 5'-triphosphate pocket.

The protein belongs to the DNA polymerase type-X family. As to quaternary structure, interacts with PRP19 and DNTTIP1. Forms a ternary complex with DNTTIP2 and core histone. Released from this complex by PCNA. Interacts with TRERF1. Mg(2+) serves as cofactor.

Its subcellular location is the nucleus. The enzyme catalyses DNA(n) + a 2'-deoxyribonucleoside 5'-triphosphate = DNA(n+1) + diphosphate. Functionally, template-independent DNA polymerase which catalyzes the random addition of deoxynucleoside 5'-triphosphate to the 3'-end of a DNA initiator. One of the in vivo functions of this enzyme is the addition of nucleotides at the junction (N region) of rearranged Ig heavy chain and T-cell receptor gene segments during the maturation of B- and T-cells. This Homo sapiens (Human) protein is DNA nucleotidylexotransferase (DNTT).